The primary structure comprises 201 residues: Peptide deformylase (201 aa).

Fe cation is bound by residues cysteine 121 and histidine 163. The active site involves glutamate 164. Histidine 167 provides a ligand contact to Fe cation.

The protein belongs to the polypeptide deformylase family. It depends on Fe(2+) as a cofactor.

The catalysed reaction is N-terminal N-formyl-L-methionyl-[peptide] + H2O = N-terminal L-methionyl-[peptide] + formate. Its function is as follows. Removes the formyl group from the N-terminal Met of newly synthesized proteins. Requires at least a dipeptide for an efficient rate of reaction. N-terminal L-methionine is a prerequisite for activity but the enzyme has broad specificity at other positions. This Parasynechococcus marenigrum (strain WH8102) protein is Peptide deformylase.